The chain runs to 191 residues: Large ribosomal subunit protein bL9 (191 aa).

Residues Ala151 to Glu191 form a disordered region.

Belongs to the bacterial ribosomal protein bL9 family.

In terms of biological role, binds to the 23S rRNA. The polypeptide is Large ribosomal subunit protein bL9 (Sinorhizobium medicae (strain WSM419) (Ensifer medicae)).